Here is a 479-residue protein sequence, read N- to C-terminus: Polyadenylate-binding protein-interacting protein 1 (479 aa).

Residues 1-114 (MSDGFDRAPG…PQQNSESAMA (114 aa)) form a disordered region. S2 carries the N-acetylalanine modification. Residues 11–33 (AGRGRSRGLGRGGGGPEGGGFPN) show a composition bias toward gly residues. R21 is subject to Omega-N-methylarginine. Residues 45-69 (PPQPKAPGFLQPPPLRQPRTTPPPG) show a composition bias toward pro residues. Over residues 98–111 (PSSQDKIPQQNSES) the composition is skewed to polar residues. Residues 116–143 (PQVVVAPVLMSKLSVNAPEFYPSGYSSS) are PABPC1-interacting motif-2 (PAM2). The segment at 157–375 (TLSEYVQDFL…LLKLVELRSS (219 aa)) is PAIP1 middle domain (PAIP1M). In terms of domain architecture, MIF4G spans 159 to 376 (SEYVQDFLNH…LKLVELRSSN (218 aa)). Residues 435–455 (DYEENGTDLSGAGDPYLDDID) form a disordered region. A PABPC1-interacting motif-1 (PAM1) region spans residues 440-479 (GTDLSGAGDPYLDDIDDEMDPEIEEAYEKFCLESERKRKQ).

Interacts with the RRM1-RRM2 and C-terminus regions of PABPC1 in a 1:1 stoichiometry. Interacts with EIF4A. In terms of assembly, (Microbial infection) Interacts (via PAIP1M) with human SARS coronaviruses SARS-COV and SARS-COV-2 NSP3 protein (via SARS-unique domain); the interaction increases binding affinity with PABPC1.

Its subcellular location is the cytoplasm. Its function is as follows. Acts as a coactivator in the regulation of translation initiation of poly(A)-containing mRNAs. Its stimulatory activity on translation is mediated via its action on PABPC1. Competes with PAIP2 for binding to PABPC1. Its association with EIF4A and PABPC1 may potentiate contacts between mRNA termini. May also be involved in translationally coupled mRNA turnover. Implicated with other RNA-binding proteins in the cytoplasmic deadenylation/translational and decay interplay of the FOS mRNA mediated by the major coding-region determinant of instability (mCRD) domain. In terms of biological role, (Microbial infection) Upon interaction with SARS coronavirus SARS-CoV NSP3 protein, plays an important role in viral protein synthesis. The sequence is that of Polyadenylate-binding protein-interacting protein 1 from Homo sapiens (Human).